The primary structure comprises 1136 residues: Unconventional myosin-Ib (1136 aa).

Positions 15–701 (IGVGDTVLLE…TLFQLEDLRK (687 aa)) constitute a Myosin motor domain. Residue serine 60 is modified to Phosphoserine. An ATP-binding site is contributed by 108-115 (GESGAGKT). A Glycyl lysine isopeptide (Lys-Gly) (interchain with G-Cter in SUMO1); alternate cross-link involves residue lysine 287. A Glycyl lysine isopeptide (Lys-Gly) (interchain with G-Cter in SUMO2); alternate cross-link involves residue lysine 287. Residues 592 to 599 (YIRCIKPN) form an actin-binding region. IQ domains follow at residues 704–729 (LEDLATLIQKIYRGWKCRTHFLLMKR), 730–750 (SQVVIAAWYRRYAQQKRYQQI), 750–778 (IKSSALVIQSYIRGWKARKILRELKHQKR), 780–807 (KEAATTIAAYWHGTQARKERRRLKDEAR), 808–837 (NKHAIAVIWAFWLGSKARRELKRLKEEARR), and 837–866 (RKHAVAVIWAYWLGLKVRREYRKFFRANAG). The 185-residue stretch at 952–1136 (KALYPSSVGQ…NNRLLEVAVP (185 aa)) folds into the TH1 domain.

This sequence belongs to the TRAFAC class myosin-kinesin ATPase superfamily. Myosin family.

Functionally, motor protein that may participate in process critical to neuronal development and function such as cell migration, neurite outgrowth and vesicular transport. This is Unconventional myosin-Ib (Myo1b) from Rattus norvegicus (Rat).